The chain runs to 424 residues: Histidine--tRNA ligase (424 aa).

This sequence belongs to the class-II aminoacyl-tRNA synthetase family. As to quaternary structure, homodimer.

It is found in the cytoplasm. The catalysed reaction is tRNA(His) + L-histidine + ATP = L-histidyl-tRNA(His) + AMP + diphosphate + H(+). The polypeptide is Histidine--tRNA ligase (Salmonella heidelberg (strain SL476)).